The sequence spans 396 residues: ATP-dependent RNA helicase eIF4A (396 aa).

A Q motif motif is present at residues 22–50 (HKFDELKLKEVLLRGIYGYGFVDPSAIQQ). A Helicase ATP-binding domain is found at 53 to 223 (ILPIIEGHDV…DKFMNKPVRI (171 aa)). ATP is bound at residue 66–73 (AQSGTGKT). The DEAD box motif lies at 171 to 174 (DEAD). Positions 234–395 (GIQQYYINVE…ELPANIADLF (162 aa)) constitute a Helicase C-terminal domain.

Belongs to the DEAD box helicase family. eIF4A subfamily. As to quaternary structure, component of the eIF4F complex, which composition varies with external and internal environmental conditions. It is composed of at least eIF4A, eIF4E and eIF4G.

The protein resides in the cytoplasm. The enzyme catalyses ATP + H2O = ADP + phosphate + H(+). Functionally, ATP-dependent RNA helicase which is a subunit of the eIF4F complex involved in cap recognition and is required for mRNA binding to ribosome. In the current model of translation initiation, eIF4A unwinds RNA secondary structures in the 5'-UTR of mRNAs which is necessary to allow efficient binding of the small ribosomal subunit, and subsequent scanning for the initiator codon. The sequence is that of ATP-dependent RNA helicase eIF4A (TIF1) from Eremothecium gossypii (strain ATCC 10895 / CBS 109.51 / FGSC 9923 / NRRL Y-1056) (Yeast).